The following is a 543-amino-acid chain: tRNA (guanine(37)-N(1))-methyltransferase (543 aa).

A mitochondrion-targeting transit peptide spans 1-59; sequence MLKSLCFVIRPAIVSRPQFRLPTIARLSLRQFQNQPQSVGFFTMAPLETRALALSPSAT. S-adenosyl-L-methionine contacts are provided by residues His-282, 320–321, and 348–349; these read DL and DG. Positions 366–405 are disordered; it reads DPAPPPKVSNRQRDREAKEARRKREQAKAAGQPVTETAPM. Asn-431 lines the S-adenosyl-L-methionine pocket.

This sequence belongs to the class I-like SAM-binding methyltransferase superfamily. TRM5/TYW2 family. In terms of assembly, monomer.

The protein localises to the mitochondrion matrix. Its subcellular location is the nucleus. The protein resides in the cytoplasm. It carries out the reaction guanosine(37) in tRNA + S-adenosyl-L-methionine = N(1)-methylguanosine(37) in tRNA + S-adenosyl-L-homocysteine + H(+). Its function is as follows. Specifically methylates the N1 position of guanosine-37 in various cytoplasmic and mitochondrial tRNAs. Methylation is not dependent on the nature of the nucleoside 5' of the target nucleoside. This is the first step in the biosynthesis of wybutosine (yW), a modified base adjacent to the anticodon of tRNAs and required for accurate decoding. The polypeptide is tRNA (guanine(37)-N(1))-methyltransferase (Cryptococcus neoformans var. neoformans serotype D (strain JEC21 / ATCC MYA-565) (Filobasidiella neoformans)).